We begin with the raw amino-acid sequence, 365 residues long: Guanine nucleotide-binding protein alpha-6 subunit (365 aa).

Gly2 carries the N-myristoyl glycine lipid modification. A G-alpha domain is found at 42–364; that stretch reads NRFKILLLGT…NENLRSAGLH (323 aa). A G1 motif region spans residues 45 to 58; the sequence is KILLLGTAESGKST. Residues 50–57, 187–193, 212–216, 281–284, and Ala336 each bind GTP; these read GTAESGKS, VHCRIST, DVGGQ, and NKYD. Positions 57 and 193 each coordinate Mg(2+). The G2 motif stretch occupies residues 185–193; it reads DIVHCRIST. The tract at residues 208–217 is G3 motif; sequence FKMVDVGGQR. The interval 277-284 is G4 motif; sequence VLFLNKYD. The interval 334–339 is G5 motif; sequence TTATDT.

The protein belongs to the G-alpha family. G proteins are composed of 3 units; alpha, beta and gamma. The alpha chain contains the guanine nucleotide binding site.

Its function is as follows. Guanine nucleotide-binding proteins (G proteins) are involved as modulators or transducers in various transmembrane signaling systems. The protein is Guanine nucleotide-binding protein alpha-6 subunit (gpa-6) of Caenorhabditis briggsae.